The following is a 357-amino-acid chain: Guanine nucleotide-binding protein G(o) subunit alpha (357 aa).

The N-myristoyl glycine moiety is linked to residue G2. C3 carries S-palmitoyl cysteine lipidation. In terms of domain architecture, G-alpha spans 32 to 357 (KDIKLLLLGA…ANNLRGCGLY (326 aa)). A G1 motif region spans residues 35–48 (KLLLLGAGESGKST). Residues 40 to 47 (GAGESGKS), 179 to 185 (LRTRVKT), 204 to 208 (DVGGQ), 273 to 276 (NKKD), and A329 contribute to the GTP site. Residues S47 and T185 each contribute to the Mg(2+) site. A G2 motif region spans residues 177 to 185 (DILRTRVKT). Positions 200–209 (FKLFDVGGQR) are G3 motif. Positions 269-276 (ILFLNKKD) are G4 motif. The tract at residues 327–332 (TCATDT) is G5 motif.

The protein belongs to the G-alpha family. G(i/o/t/z) subfamily. G proteins are composed of 3 units; alpha, beta and gamma. The alpha chain contains the guanine nucleotide binding site.

Guanine nucleotide-binding proteins (G proteins) are involved as modulators or transducers in various transmembrane signaling systems. The G(o) protein function is not clear. This is Guanine nucleotide-binding protein G(o) subunit alpha (SCGOA) from Mizuhopecten yessoensis (Japanese scallop).